A 215-amino-acid chain; its full sequence is Adenylate kinase (215 aa).

10 to 15 (GAGKGT) contacts ATP. The tract at residues 30 to 59 (STGDIFRKNISENTPLGMEARSYMDKGLLV) is NMP. AMP contacts are provided by residues Thr-31, Arg-36, 57-59 (LLV), 85-88 (GFPR), and Gln-92. Positions 126-163 (GRRVCTSCGGSFHIKFNPPTIDGKCNLCGSDIVQRKDD) are LID. Arg-127 contributes to the ATP binding site. Residues Cys-130 and Cys-133 each contribute to the Zn(2+) site. 136 to 137 (SF) contacts ATP. The Zn(2+) site is built by Cys-150 and Cys-153. Positions 160 and 171 each coordinate AMP. An ATP-binding site is contributed by Lys-199.

This sequence belongs to the adenylate kinase family. Monomer.

The protein localises to the cytoplasm. It carries out the reaction AMP + ATP = 2 ADP. Its pathway is purine metabolism; AMP biosynthesis via salvage pathway; AMP from ADP: step 1/1. Its function is as follows. Catalyzes the reversible transfer of the terminal phosphate group between ATP and AMP. Plays an important role in cellular energy homeostasis and in adenine nucleotide metabolism. The polypeptide is Adenylate kinase (Clostridium botulinum (strain Eklund 17B / Type B)).